Consider the following 883-residue polypeptide: Probable pre-mRNA-splicing factor ATP-dependent RNA helicase DEAH8 (883 aa).

One can recognise a Helicase ATP-binding domain in the interval 232-395 (LKLIEENQVL…FDSARIYLIP (164 aa)). 245-252 (GETGSGKT) provides a ligand contact to ATP. The DEAH box motif lies at 342–345 (DEAH). Residues 416–589 (TVIRTVVQIH…SVVLTLKSLG (174 aa)) enclose the Helicase C-terminal domain. The interval 845–883 (EDTRPKKTQRRIEEASTSKVDTNKKTRTSKVDTNKKSKR) is disordered.

Belongs to the DEAD box helicase family. DEAH subfamily. PRP2 sub-subfamily. In terms of tissue distribution, predominantly expressed in flowers.

It catalyses the reaction ATP + H2O = ADP + phosphate + H(+). Functionally, may be involved in pre-mRNA splicing. In Arabidopsis thaliana (Mouse-ear cress), this protein is Probable pre-mRNA-splicing factor ATP-dependent RNA helicase DEAH8.